Consider the following 489-residue polypeptide: Rhamnulokinase (489 aa).

13-17 serves as a coordination point for ATP; it reads ASSGR. The cysteines at positions 68 and 222 are disulfide-linked. Residues glycine 83 and 236–238 contribute to the substrate site; that span reads HDT. Residue aspartate 237 is the Proton acceptor of the active site. Residue threonine 259 participates in ATP binding. Residue asparagine 296 coordinates substrate. Position 304 (glutamine 304) interacts with ATP. A disulfide bridge links cysteine 353 with cysteine 370. Glycine 402 lines the ATP pocket. A disulfide bond links cysteine 413 and cysteine 417.

It belongs to the rhamnulokinase family. The cofactor is Mg(2+).

It carries out the reaction L-rhamnulose + ATP = L-rhamnulose 1-phosphate + ADP + H(+). The protein operates within carbohydrate degradation; L-rhamnose degradation; glycerone phosphate from L-rhamnose: step 2/3. Its function is as follows. Involved in the catabolism of L-rhamnose (6-deoxy-L-mannose). Catalyzes the transfer of the gamma-phosphate group from ATP to the 1-hydroxyl group of L-rhamnulose to yield L-rhamnulose 1-phosphate. This chain is Rhamnulokinase, found in Salmonella heidelberg (strain SL476).